A 146-amino-acid chain; its full sequence is Hemoglobin cathodic subunit beta (146 aa).

In terms of domain architecture, Globin spans 2-146; that stretch reads EWSSSERSTI…LIHALSRQYF (145 aa). Heme b-binding residues include His63 and His92.

It belongs to the globin family. In terms of assembly, heterotetramer of two alpha chains and two beta chains. In terms of tissue distribution, red blood cells.

Involved in oxygen transport from gills to the various peripheral tissues. This Gymnothorax unicolor (Brown moray) protein is Hemoglobin cathodic subunit beta.